A 310-amino-acid polypeptide reads, in one-letter code: Putative olfactory receptor 7A2 (310 aa).

The Extracellular portion of the chain corresponds to 1–26 (MVKAGNETQISEFLLLGFSEKQELQP). N-linked (GlcNAc...) asparagine glycosylation is present at Asn6. Residues 27 to 47 (FLFGLFLSMYLVTVLGNLLII) form a helical membrane-spanning segment. The Cytoplasmic portion of the chain corresponds to 48-55 (LAAISDSC). The chain crosses the membrane as a helical span at residues 56–76 (LHTPMYFFLSNLSFVDICFAS). Topologically, residues 77-100 (TMVPKMLVNIQTQSKVITYAGCIT) are extracellular. A disulfide bridge links Cys98 with Cys190. Residues 101–121 (QMCFFVLFIVLDSLLLTVMAY) traverse the membrane as a helical segment. The Cytoplasmic segment spans residues 122–140 (DQFVAICHPLHYTVIMSPQ). Residues 141 to 161 (LCGLLVLVSWIMSVLNSMLQS) traverse the membrane as a helical segment. Topologically, residues 162-198 (LVTLQLSFCTDLEIPHFFCELNEMIHLACSDTFVNNM) are extracellular. A helical transmembrane segment spans residues 199–218 (VMHFAAVLLDGGPLVGILYS). Over 219-238 (YCRIVSSIRAISSTQGKYKA) the chain is Cytoplasmic. A helical membrane pass occupies residues 239 to 259 (LSTCASHLSVVSIFYGTGLGV). Residues 260–272 (YLSSTMTQNLHST) are Extracellular-facing. The helical transmembrane segment at 273–293 (AVASVMYTVVTPMLNPFIYSL) threads the bilayer. Topologically, residues 294 to 310 (RNKDIKGALTQFFRGKQ) are cytoplasmic.

It belongs to the G-protein coupled receptor 1 family.

It localises to the cell membrane. In terms of biological role, odorant receptor. This chain is Putative olfactory receptor 7A2 (OR7A2P), found in Homo sapiens (Human).